Here is a 534-residue protein sequence, read N- to C-terminus: Replication factor C large subunit (534 aa).

ATP is bound at residue 45–52; it reads GPPGIGKT. Residues 444-463 are compositionally biased toward basic and acidic residues; sequence KNKKEIKVKTKKDTVEDSSK. The segment at 444–534 is disordered; that stretch reads KNKKEIKVKT…KSRQTTLFDF (91 aa). Residues 488 to 510 show a composition bias toward low complexity; it reads SSNSTTKNKTESPKNSSKTSSKT. The span at 517 to 527 shows a compositional bias: basic residues; sequence TSKKNNKKKSR.

It belongs to the activator 1 small subunits family. RfcL subfamily. Heteromultimer composed of small subunits (RfcS) and large subunits (RfcL).

In terms of biological role, part of the RFC clamp loader complex which loads the PCNA sliding clamp onto DNA. The chain is Replication factor C large subunit from Methanosphaera stadtmanae (strain ATCC 43021 / DSM 3091 / JCM 11832 / MCB-3).